The primary structure comprises 616 residues: Dihydroxy-acid dehydratase (616 aa).

Residue Asp-81 participates in Mg(2+) binding. Cys-122 lines the [2Fe-2S] cluster pocket. 2 residues coordinate Mg(2+): Asp-123 and Lys-124. Lys-124 carries the post-translational modification N6-carboxylysine. Position 195 (Cys-195) interacts with [2Fe-2S] cluster. Glu-491 contacts Mg(2+). The active-site Proton acceptor is the Ser-517.

Belongs to the IlvD/Edd family. In terms of assembly, homodimer. The cofactor is [2Fe-2S] cluster. Mg(2+) serves as cofactor.

The enzyme catalyses (2R)-2,3-dihydroxy-3-methylbutanoate = 3-methyl-2-oxobutanoate + H2O. It catalyses the reaction (2R,3R)-2,3-dihydroxy-3-methylpentanoate = (S)-3-methyl-2-oxopentanoate + H2O. The protein operates within amino-acid biosynthesis; L-isoleucine biosynthesis; L-isoleucine from 2-oxobutanoate: step 3/4. It participates in amino-acid biosynthesis; L-valine biosynthesis; L-valine from pyruvate: step 3/4. Functions in the biosynthesis of branched-chain amino acids. Catalyzes the dehydration of (2R,3R)-2,3-dihydroxy-3-methylpentanoate (2,3-dihydroxy-3-methylvalerate) into 2-oxo-3-methylpentanoate (2-oxo-3-methylvalerate) and of (2R)-2,3-dihydroxy-3-methylbutanoate (2,3-dihydroxyisovalerate) into 2-oxo-3-methylbutanoate (2-oxoisovalerate), the penultimate precursor to L-isoleucine and L-valine, respectively. This Escherichia coli O157:H7 (strain EC4115 / EHEC) protein is Dihydroxy-acid dehydratase.